Consider the following 540-residue polypeptide: Coatomer subunit delta (540 aa).

The interval 169-263 is disordered; it reads RHEEMLRGKR…GMILGGKSGT (95 aa). Gly residues predominate over residues 179-197; that stretch reads SGGYTGISGGGGMGSGGMG. Positions 212–229 are enriched in low complexity; sequence NNNNNNNNNNNNNNNNNN. Polar residues predominate over residues 238–250; that stretch reads SPNTSRPSAASSG. Residues 251–261 are compositionally biased toward gly residues; it reads SQGGMILGGKS. The 237-residue stretch at 304–540 folds into the MHD domain; it reads QEGVHITVEE…TLSVDTYEIK (237 aa).

This sequence belongs to the adaptor complexes medium subunit family. Delta-COP subfamily. In terms of assembly, oligomeric complex that consists of at least the alpha, beta, beta', gamma, delta, epsilon and zeta subunits.

The protein resides in the cytoplasm. Its subcellular location is the golgi apparatus membrane. It localises to the cytoplasmic vesicle. The protein localises to the COPI-coated vesicle membrane. Its function is as follows. The coatomer is a cytosolic protein complex that binds to dilysine motifs and reversibly associates with Golgi non-clathrin-coated vesicles, which further mediate biosynthetic protein transport from the ER, via the Golgi up to the trans Golgi network. Coatomer complex is required for budding from Golgi membranes, and is essential for the retrograde Golgi-to-ER transport of dilysine-tagged proteins. The sequence is that of Coatomer subunit delta (copd) from Dictyostelium discoideum (Social amoeba).